Consider the following 445-residue polypeptide: UPF0210 protein SEQ_0468 (445 aa).

The protein belongs to the UPF0210 family. As to quaternary structure, homodimer.

In Streptococcus equi subsp. equi (strain 4047), this protein is UPF0210 protein SEQ_0468.